The chain runs to 652 residues: Translation factor guf1, mitochondrial (652 aa).

The transit peptide at 1 to 44 directs the protein to the mitochondrion; the sequence is MSIFRLSRTFSLETCLKSSSFKIRWRFFSVSYASRKLASEDNKP. Residues 56-237 form the tr-type G domain; sequence NRVRNWAVIA…EIIQKIPPPK (182 aa). GTP is bound by residues 65–72, 130–134, and 184–187; these read AHIDHGKS, DTPGH, and NKVD.

Belongs to the TRAFAC class translation factor GTPase superfamily. Classic translation factor GTPase family. LepA subfamily.

The protein localises to the mitochondrion inner membrane. The enzyme catalyses GTP + H2O = GDP + phosphate + H(+). In terms of biological role, promotes mitochondrial protein synthesis. May act as a fidelity factor of the translation reaction, by catalyzing a one-codon backward translocation of tRNAs on improperly translocated ribosomes. Binds to mitochondrial ribosomes in a GTP-dependent manner. The chain is Translation factor guf1, mitochondrial (guf1) from Schizosaccharomyces pombe (strain 972 / ATCC 24843) (Fission yeast).